A 146-amino-acid polypeptide reads, in one-letter code: UPF0742 protein C1348.03 (146 aa).

Residues 38 to 60 (LTVKYCLAVKLLIYLLYCWYIYS) form a helical membrane-spanning segment.

This sequence belongs to the UPF0742 family.

It is found in the cytoplasm. It localises to the nucleus membrane. This is UPF0742 protein C1348.03 from Schizosaccharomyces pombe (strain 972 / ATCC 24843) (Fission yeast).